The chain runs to 261 residues: Kallikrein 1-related peptidase b3 (261 aa).

An N-terminal signal peptide occupies residues 1–18 (MWFLILFLALSLGGIDAA). Positions 19–24 (PPVQSR) are cleaved as a propeptide — activation peptide. A segment B1 region spans residues 25 to 107 (IVGGFKCEKN…HPGFNMSLMR (83 aa)). In terms of domain architecture, Peptidase S1 spans 25–258 (IVGGFKCEKN…FTSWIKDTMA (234 aa)). Cystine bridges form between Cys31/Cys173, Cys50/Cys66, Cys152/Cys219, Cys184/Cys198, and Cys209/Cys234. The active-site Charge relay system is the His65. N-linked (GlcNAc...) asparagine glycosylation is present at Asn102. The segment C stretch occupies residues 112–164 (FLEYDYSNDLMLLRLSKPADITDTVKPITLPTEEPKLGSTCLASGWGSITPTK). The tract at residues 112–261 (FLEYDYSNDL…WIKDTMAKNP (150 aa)) is segment A. The Charge relay system role is filled by Asp120. The tract at residues 165 to 261 (FQFTDDLYCV…WIKDTMAKNP (97 aa)) is segment B2. The active-site Charge relay system is the Ser213. His231 and Glu236 together coordinate Zn(2+).

This sequence belongs to the peptidase S1 family. Kallikrein subfamily. 7S nerve growth factor is composed of two alpha chains, a beta dimer composed of identical chains, and two gamma chains. The cofactor is Zn(2+).

The catalysed reaction is Preferential cleavage of Arg-|-Xaa bonds in small molecule substrates. Highly selective action to release kallidin (lysyl-bradykinin) from kininogen involves hydrolysis of Met-|-Xaa or Leu-|-Xaa.. Its function is as follows. 7S NGF alpha chain stabilizes the 7S complex. The beta dimer promotes neurite growth. The gamma chain is an arginine-specific protease; it may also have plasminogen activator activity, as well as mitogenic activity for chick embryo fibroblasts. This is Kallikrein 1-related peptidase b3 (Klk1b3) from Mus musculus (Mouse).